We begin with the raw amino-acid sequence, 523 residues long: GMP synthase [glutamine-hydrolyzing] (523 aa).

A Glutamine amidotransferase type-1 domain is found at 8-205 (KILILDFGSQ…VVNICGCTTN (198 aa)). The active-site Nucleophile is Cys85. Catalysis depends on residues His179 and Glu181. One can recognise a GMPS ATP-PPase domain in the interval 206-398 (WTPENIIEDA…LGLPAEMLNR (193 aa)). 233 to 239 (SGGVDSS) contributes to the ATP binding site.

In terms of assembly, homodimer.

It carries out the reaction XMP + L-glutamine + ATP + H2O = GMP + L-glutamate + AMP + diphosphate + 2 H(+). It participates in purine metabolism; GMP biosynthesis; GMP from XMP (L-Gln route): step 1/1. Functionally, catalyzes the synthesis of GMP from XMP. The protein is GMP synthase [glutamine-hydrolyzing] of Mannheimia succiniciproducens (strain KCTC 0769BP / MBEL55E).